Consider the following 630-residue polypeptide: YTH domain-containing family protein 1 (630 aa).

3 disordered regions span residues D38 to Q113, Y160 to Y183, and Q200 to H241. The segment covering P70 to S102 has biased composition (polar residues). In terms of domain architecture, YTH spans E382–F590.

Belongs to the YTHDF family. YTHDF1 subfamily.

The protein resides in the cytoplasm. Its subcellular location is the P-body. Specifically recognizes and binds N6-methyladenosine (m6A)-containing mRNAs, and regulates their stability. M6A is a modification present at internal sites of mRNAs and some non-coding RNAs and plays a role in mRNA stability and processing. Plays a role in pathogenicity towards plant host. This Pyricularia oryzae (strain 70-15 / ATCC MYA-4617 / FGSC 8958) (Rice blast fungus) protein is YTH domain-containing family protein 1.